Here is a 512-residue protein sequence, read N- to C-terminus: Polyamine aminopropyltransferase (512 aa).

Transmembrane regions (helical) follow at residues 19 to 39 (IVSI…SYIL), 48 to 68 (LTIS…EKFM), 76 to 96 (VWIE…MFGI), 108 to 128 (YLYS…PILI), 151 to 171 (AGGL…FGMV), 172 to 192 (KTAF…LWLF), and 199 to 219 (FIVH…GLFF). One can recognise a PABS domain in the interval 215-450 (AGLFFGEEMA…GNWGFVMASR (236 aa)). The tract at residues 217-457 (LFFGEEMAFN…ASREEIDLDI (241 aa)) is spermidine synthase. Q245 is an S-methyl-5'-thioadenosine binding site. Residues H275 and D299 each contribute to the spermidine site. S-methyl-5'-thioadenosine is bound by residues D319 and 353 to 354 (DA). The active-site Proton acceptor is the D371.

Belongs to the spermidine/spermine synthase family. As to quaternary structure, homodimer or homotetramer.

It is found in the cell membrane. It catalyses the reaction S-adenosyl 3-(methylsulfanyl)propylamine + putrescine = S-methyl-5'-thioadenosine + spermidine + H(+). It participates in amine and polyamine biosynthesis; spermidine biosynthesis; spermidine from putrescine: step 1/1. Its function is as follows. Catalyzes the irreversible transfer of a propylamine group from the amino donor S-adenosylmethioninamine (decarboxy-AdoMet) to putrescine (1,4-diaminobutane) to yield spermidine. This Oceanobacillus iheyensis (strain DSM 14371 / CIP 107618 / JCM 11309 / KCTC 3954 / HTE831) protein is Polyamine aminopropyltransferase.